The chain runs to 426 residues: Serine--tRNA ligase (426 aa).

227–229 (TSE) contributes to the L-serine binding site. Residues 258 to 260 (RKE) and Val274 each bind ATP. Residue Glu281 participates in L-serine binding. 345–348 (ELTS) serves as a coordination point for ATP. Residue Thr380 participates in L-serine binding.

The protein belongs to the class-II aminoacyl-tRNA synthetase family. Type-1 seryl-tRNA synthetase subfamily. As to quaternary structure, homodimer. The tRNA molecule binds across the dimer.

Its subcellular location is the cytoplasm. It carries out the reaction tRNA(Ser) + L-serine + ATP = L-seryl-tRNA(Ser) + AMP + diphosphate + H(+). The enzyme catalyses tRNA(Sec) + L-serine + ATP = L-seryl-tRNA(Sec) + AMP + diphosphate + H(+). It functions in the pathway aminoacyl-tRNA biosynthesis; selenocysteinyl-tRNA(Sec) biosynthesis; L-seryl-tRNA(Sec) from L-serine and tRNA(Sec): step 1/1. In terms of biological role, catalyzes the attachment of serine to tRNA(Ser). Is also able to aminoacylate tRNA(Sec) with serine, to form the misacylated tRNA L-seryl-tRNA(Sec), which will be further converted into selenocysteinyl-tRNA(Sec). The protein is Serine--tRNA ligase of Clavibacter sepedonicus (Clavibacter michiganensis subsp. sepedonicus).